Here is a 316-residue protein sequence, read N- to C-terminus: Coiled-coil domain-containing protein 42 (316 aa).

Coiled coils occupy residues 43-151 (RLLE…EYSI) and 182-236 (HHDL…SDVI).

It belongs to the CFAP73 family. In terms of assembly, interacts with ODF1 and ODF2. Interacts with CCDC38. Interacts with CCDC146. Interacts with CFAP53.

The protein localises to the cytoplasm. It localises to the perinuclear region. The protein resides in the cytoskeleton. It is found in the cell projection. Its subcellular location is the cilium. The protein localises to the flagellum. It localises to the microtubule organizing center. The protein resides in the centrosome. Its function is as follows. Essential for male fertility. Required for sperm development. The sequence is that of Coiled-coil domain-containing protein 42 from Bos taurus (Bovine).